The chain runs to 341 residues: Protein-glutamate methylesterase/protein-glutamine glutaminase 2 (341 aa).

Residues 7–120 (KTLIVDDSLL…NRDLDSFFSE (114 aa)) enclose the Response regulatory domain. A 4-aspartylphosphate modification is found at D58. Residues 155-341 (VIAIGASTGG…QALYKLINQL (187 aa)) form the CheB-type methylesterase domain. Catalysis depends on residues S161, H187, and D283.

This sequence belongs to the CheB family. In terms of processing, phosphorylated by CheA. Phosphorylation of the N-terminal regulatory domain activates the methylesterase activity.

The protein localises to the cytoplasm. It catalyses the reaction [protein]-L-glutamate 5-O-methyl ester + H2O = L-glutamyl-[protein] + methanol + H(+). The enzyme catalyses L-glutaminyl-[protein] + H2O = L-glutamyl-[protein] + NH4(+). Involved in chemotaxis. Part of a chemotaxis signal transduction system that modulates chemotaxis in response to various stimuli. Catalyzes the demethylation of specific methylglutamate residues introduced into the chemoreceptors (methyl-accepting chemotaxis proteins or MCP) by CheR. Also mediates the irreversible deamidation of specific glutamine residues to glutamic acid. This is Protein-glutamate methylesterase/protein-glutamine glutaminase 2 from Syntrophomonas wolfei subsp. wolfei (strain DSM 2245B / Goettingen).